Here is a 458-residue protein sequence, read N- to C-terminus: Argininosuccinate lyase (458 aa).

The protein belongs to the lyase 1 family. Argininosuccinate lyase subfamily.

It localises to the cytoplasm. It carries out the reaction 2-(N(omega)-L-arginino)succinate = fumarate + L-arginine. Its pathway is amino-acid biosynthesis; L-arginine biosynthesis; L-arginine from L-ornithine and carbamoyl phosphate: step 3/3. The chain is Argininosuccinate lyase from Buchnera aphidicola subsp. Baizongia pistaciae (strain Bp).